We begin with the raw amino-acid sequence, 203 residues long: Dual-action ribosomal maturation protein DarP (203 aa).

Disordered regions lie at residues 1–31 (MPPMTRKTRIQPIEPVAEEDDNGYDRPSKSQ) and 182–203 (GGASDSDDEAADDAGDDHDDEA). The segment covering 186 to 203 (DSDDEAADDAGDDHDDEA) has biased composition (acidic residues).

Belongs to the DarP family.

The protein resides in the cytoplasm. Its function is as follows. Member of a network of 50S ribosomal subunit biogenesis factors which assembles along the 30S-50S interface, preventing incorrect 23S rRNA structures from forming. Promotes peptidyl transferase center (PTC) maturation. This Burkholderia cenocepacia (strain HI2424) protein is Dual-action ribosomal maturation protein DarP.